We begin with the raw amino-acid sequence, 98 residues long: Large ribosomal subunit protein bL21 (98 aa).

This sequence belongs to the bacterial ribosomal protein bL21 family. Part of the 50S ribosomal subunit. Contacts protein L20.

Its function is as follows. This protein binds to 23S rRNA in the presence of protein L20. This is Large ribosomal subunit protein bL21 from Novosphingobium aromaticivorans (strain ATCC 700278 / DSM 12444 / CCUG 56034 / CIP 105152 / NBRC 16084 / F199).